The following is a 502-amino-acid chain: MAPLKLNSRNLSQIFAAGKSLVKVPTYQRNGAVKEGIVHIGVGGFHRAHLAVYVDRLMQEQGVTDYAICGVGLQPFDSTMRDALASQDNLYTVIERSAKGSFAHVIGSINSYLFAPDDREAVIAKMANPDTRIVSLTITESGYYYNENTHELQKEHPDIQFDLNPVNENKPRTTFGFLYAALERRHRLGLKPFTVMSCDNMQKNGSITRHMLESFARQRNPKVAEWIAEEGAFPNAMVDRITPQTSATDKTALAENFGIEDSWPVVTEPFMQWVIEDKFSDGRPPFEKIGVQVVKDVHAVEQFEKHKLRLLNGSHSAIGYPGQLAGFNYVHEVMEHPLFSKFVWQMMQQEVKPLLPEIPGVNIDDYCNTLIERFTNPTIMDQLPRICLNASGKIPQFIMPSIAEAIWVTAPFRRLCFVAAAWFCYIKGIDDSGKAFEVVDPMLNELQAKARAGGTNPSELLSIKNLFGDDLRTDPRFLKEVTKAMEDITRDGILKTLPKYID.

37–48 (IVHIGVGGFHRA) lines the NAD(+) pocket.

It belongs to the mannitol dehydrogenase family. In terms of assembly, monomer.

The enzyme catalyses D-mannitol + NAD(+) = D-fructose + NADH + H(+). Functionally, catalyzes the NAD(H)-dependent interconversion of D-fructose and D-mannitol in the mannitol metabolic pathway. The polypeptide is Mannitol 2-dehydrogenase (Aspergillus clavatus (strain ATCC 1007 / CBS 513.65 / DSM 816 / NCTC 3887 / NRRL 1 / QM 1276 / 107)).